We begin with the raw amino-acid sequence, 215 residues long: Peroxiredoxin 1 (215 aa).

The 156-residue stretch at K2–T157 folds into the Thioredoxin domain. The active-site Cysteine sulfenic acid (-SOH) intermediate is the C44. A substrate-binding site is contributed by R120.

The protein belongs to the peroxiredoxin family. Prx6 subfamily. Homodecamer. Pentamer of dimers that assemble into a ring structure.

The protein resides in the cytoplasm. It carries out the reaction a hydroperoxide + [thioredoxin]-dithiol = an alcohol + [thioredoxin]-disulfide + H2O. Functionally, thiol-specific peroxidase that catalyzes the reduction of hydrogen peroxide and organic hydroperoxides to water and alcohols, respectively. Plays a role in cell protection against oxidative stress by detoxifying peroxides. The polypeptide is Peroxiredoxin 1 (Caldanaerobacter subterraneus subsp. tengcongensis (strain DSM 15242 / JCM 11007 / NBRC 100824 / MB4) (Thermoanaerobacter tengcongensis)).